Consider the following 182-residue polypeptide: Ribosome-recycling factor (182 aa).

This sequence belongs to the RRF family.

The protein resides in the cytoplasm. In terms of biological role, responsible for the release of ribosomes from messenger RNA at the termination of protein biosynthesis. May increase the efficiency of translation by recycling ribosomes from one round of translation to another. The chain is Ribosome-recycling factor from Synechocystis sp. (strain ATCC 27184 / PCC 6803 / Kazusa).